Reading from the N-terminus, the 484-residue chain is tRNA-2-methylthio-N(6)-dimethylallyladenosine synthase (484 aa).

An MTTase N-terminal domain is found at G29–A149. 6 residues coordinate [4Fe-4S] cluster: C38, C78, C112, C186, C190, and C193. One can recognise a Radical SAM core domain in the interval R172–E401. One can recognise a TRAM domain in the interval A404–V474.

Belongs to the methylthiotransferase family. MiaB subfamily. As to quaternary structure, monomer. [4Fe-4S] cluster is required as a cofactor.

The protein resides in the cytoplasm. It catalyses the reaction N(6)-dimethylallyladenosine(37) in tRNA + (sulfur carrier)-SH + AH2 + 2 S-adenosyl-L-methionine = 2-methylsulfanyl-N(6)-dimethylallyladenosine(37) in tRNA + (sulfur carrier)-H + 5'-deoxyadenosine + L-methionine + A + S-adenosyl-L-homocysteine + 2 H(+). Functionally, catalyzes the methylthiolation of N6-(dimethylallyl)adenosine (i(6)A), leading to the formation of 2-methylthio-N6-(dimethylallyl)adenosine (ms(2)i(6)A) at position 37 in tRNAs that read codons beginning with uridine. The chain is tRNA-2-methylthio-N(6)-dimethylallyladenosine synthase from Bifidobacterium longum (strain DJO10A).